Here is a 305-residue protein sequence, read N- to C-terminus: tRNA dimethylallyltransferase (305 aa).

Position 15 to 22 (Gly-15 to Ser-22) interacts with ATP. Thr-17–Ser-22 is a substrate binding site. 2 interaction with substrate tRNA regions span residues Asp-40–Gln-43 and Gln-164–Arg-168.

This sequence belongs to the IPP transferase family. In terms of assembly, monomer. Mg(2+) serves as cofactor.

It catalyses the reaction adenosine(37) in tRNA + dimethylallyl diphosphate = N(6)-dimethylallyladenosine(37) in tRNA + diphosphate. In terms of biological role, catalyzes the transfer of a dimethylallyl group onto the adenine at position 37 in tRNAs that read codons beginning with uridine, leading to the formation of N6-(dimethylallyl)adenosine (i(6)A). The chain is tRNA dimethylallyltransferase from Sinorhizobium medicae (strain WSM419) (Ensifer medicae).